A 251-amino-acid chain; its full sequence is Flap endonuclease Xni (251 aa).

Residue Asp-104 participates in Mg(2+) binding. Residues 160-249 (VTPEQLADYW…LDGNLQQLRL (90 aa)) enclose the 5'-3' exonuclease domain. K(+) is bound by residues Leu-171, Ala-172, Pro-180, Val-182, and Ile-185. The interval 184-189 (GIGPKS) is interaction with DNA.

Belongs to the Xni family. Requires Mg(2+) as cofactor. K(+) serves as cofactor.

Has flap endonuclease activity. During DNA replication, flap endonucleases cleave the 5'-overhanging flap structure that is generated by displacement synthesis when DNA polymerase encounters the 5'-end of a downstream Okazaki fragment. The chain is Flap endonuclease Xni from Klebsiella pneumoniae subsp. pneumoniae (strain ATCC 700721 / MGH 78578).